The following is a 337-amino-acid chain: tRNA N6-adenosine threonylcarbamoyltransferase (337 aa).

Fe cation contacts are provided by His-111 and His-115. Residues 134–138 (LVSGG), Asp-167, Gly-180, and Asn-272 each bind substrate. Residue Asp-300 coordinates Fe cation.

The protein belongs to the KAE1 / TsaD family. It depends on Fe(2+) as a cofactor.

The protein resides in the cytoplasm. It catalyses the reaction L-threonylcarbamoyladenylate + adenosine(37) in tRNA = N(6)-L-threonylcarbamoyladenosine(37) in tRNA + AMP + H(+). Required for the formation of a threonylcarbamoyl group on adenosine at position 37 (t(6)A37) in tRNAs that read codons beginning with adenine. Is involved in the transfer of the threonylcarbamoyl moiety of threonylcarbamoyl-AMP (TC-AMP) to the N6 group of A37, together with TsaE and TsaB. TsaD likely plays a direct catalytic role in this reaction. This is tRNA N6-adenosine threonylcarbamoyltransferase from Escherichia coli O127:H6 (strain E2348/69 / EPEC).